The chain runs to 88 residues: Arminin 1a (88 aa).

A signal peptide spans 1–18; the sequence is MKTVLAFLFLPFIAFTHA. The propeptide occupies 19-57; that stretch reads ESYEDVKEEIKNEAEKEIFEDLEEESDALDSSVREFNDA. Residue V85 is modified to Valine amide.

The protein belongs to the arminin family. Expressed in entodermal epithelium along the body column.

It is found in the secreted. The protein resides in the target cell membrane. Antimicrobial peptide with a broad-spectrum antimicrobial activity. Shows very strong bactericidal activity against B.megaterium (MBC=0.1 uM), E.coli (MBC=0.2 uM), S.aureus (MBC=0.4 uM), methicillin-resistant S.aureus (MRSA) (MBC=0.4-0.8 uM), vancomycin-resistant enterococci (VRE) (E.faecalis (MBC=1.6 uM), and E.faecium (MBC=0.4-0.8 uM)), and extended-spectrum beta-lactamase (ESBL)-producing enterobacteriaceae strains (K.pneumoniae (MBC=0.4-0.8 uM), E.coli (MBC=0.2-0.4 uM)). Keeps its antibacterial activity under a wide range of salt concentrations that mimic physiological conditions of human blood, which is surprising, since Hydra is an obligate freshwater animal with nearly no salt tolerance. Does not affect red blood cells. The protein is Arminin 1a of Hydra vulgaris (Hydra).